The sequence spans 595 residues: Isoprene synthase, chloroplastic (595 aa).

The N-terminal 37 residues, 1-37, are a transit peptide targeting the chloroplast; that stretch reads MATELLCLHRPISLTHKLFRNPLPKVIQATPLTLKLR. Aspartate 345 is a binding site for dimethylallyl diphosphate. Mg(2+) contacts are provided by aspartate 345 and aspartate 349. Residues 345–349 carry the DDXXD motif motif; it reads DDIYD. Dimethylallyl diphosphate is bound by residues glutamate 423, arginine 486, and asparagine 489. Mg(2+) is bound by residues asparagine 489, serine 493, and glutamate 497.

The protein belongs to the terpene synthase family. Tpsb subfamily. It depends on Mg(2+) as a cofactor. In terms of tissue distribution, predominantly expressed in leaves.

The protein resides in the plastid. The protein localises to the chloroplast. The enzyme catalyses dimethylallyl diphosphate = isoprene + diphosphate. It functions in the pathway terpene metabolism. Its function is as follows. Lyase that catalyzes the formation of isoprene from dimethylallyl diphosphate, but not from isopentenyl diphosphate or geranyl diphosphate. This chain is Isoprene synthase, chloroplastic, found in Populus alba (White poplar).